A 986-amino-acid polypeptide reads, in one-letter code: Bifunctional glutamine synthetase adenylyltransferase/adenylyl-removing enzyme (986 aa).

The segment at 1–473 is adenylyl removase; it reads MTSSAPGNAD…HYARLFEGDP (473 aa). An adenylyl transferase region spans residues 478 to 986; sequence SLPPVNYGAG…RRVFTALLER (509 aa).

This sequence belongs to the GlnE family. It depends on Mg(2+) as a cofactor.

It carries out the reaction [glutamine synthetase]-O(4)-(5'-adenylyl)-L-tyrosine + phosphate = [glutamine synthetase]-L-tyrosine + ADP. The catalysed reaction is [glutamine synthetase]-L-tyrosine + ATP = [glutamine synthetase]-O(4)-(5'-adenylyl)-L-tyrosine + diphosphate. In terms of biological role, involved in the regulation of glutamine synthetase GlnA, a key enzyme in the process to assimilate ammonia. When cellular nitrogen levels are high, the C-terminal adenylyl transferase (AT) inactivates GlnA by covalent transfer of an adenylyl group from ATP to specific tyrosine residue of GlnA, thus reducing its activity. Conversely, when nitrogen levels are low, the N-terminal adenylyl removase (AR) activates GlnA by removing the adenylyl group by phosphorolysis, increasing its activity. The regulatory region of GlnE binds the signal transduction protein PII (GlnB) which indicates the nitrogen status of the cell. The sequence is that of Bifunctional glutamine synthetase adenylyltransferase/adenylyl-removing enzyme from Bradyrhizobium sp. (strain ORS 278).